Reading from the N-terminus, the 293-residue chain is ADP-forming sulfoacetate-CoA ligase subunit SauD (293 aa).

CoA is bound by residues 17-20, lysine 43, and 96-98; these read TGKE and IAD. Histidine 251 functions as the Tele-phosphohistidine intermediate in the catalytic mechanism.

The protein belongs to the succinate/malate CoA ligase alpha subunit family. As to quaternary structure, forms a complex with SauC.

The catalysed reaction is sulfoacetate + ATP + CoA = sulfoacetyl-CoA + ADP + phosphate. Functionally, involved in the degradation of sulfoacetate. Catalyzes the CoA- and ATP-dependent conversion of sulfoacetate to sulfoacetyl-CoA and ADP. Cannot use other sulfonic and carboxylic acids, and shows only residual activity with 3-sulfopropanoate and malonic acid. The protein is ADP-forming sulfoacetate-CoA ligase subunit SauD of Bilophila wadsworthia (strain 3_1_6).